Here is a 31-residue protein sequence, read N- to C-terminus: Cytochrome b6-f complex subunit 6 (31 aa).

A helical membrane pass occupies residues 4–26 (ITSYFGFLLAASTITPALLIGLS).

This sequence belongs to the PetL family. The 4 large subunits of the cytochrome b6-f complex are cytochrome b6, subunit IV (17 kDa polypeptide, PetD), cytochrome f and the Rieske protein, while the 4 small subunits are PetG, PetL, PetM and PetN. The complex functions as a dimer.

It localises to the plastid. The protein localises to the chloroplast thylakoid membrane. Its function is as follows. Component of the cytochrome b6-f complex, which mediates electron transfer between photosystem II (PSII) and photosystem I (PSI), cyclic electron flow around PSI, and state transitions. PetL is important for photoautotrophic growth as well as for electron transfer efficiency and stability of the cytochrome b6-f complex. This chain is Cytochrome b6-f complex subunit 6, found in Illicium oligandrum (Star anise).